Reading from the N-terminus, the 21-residue chain is Histone H2B 1 (21 aa).

Positions Met1–Ala21 are disordered. Lys6 and Lys11 each carry N6-acetyllysine. Over residues Ala8–Ala21 the composition is skewed to basic residues. Ser13 carries the post-translational modification Phosphoserine. 2 positions are modified to N6-acetyllysine: Lys14 and Lys19. A Glycyl lysine isopeptide (Lys-Gly) (interchain with G-Cter in ubiquitin) cross-link involves residue Lys19.

This sequence belongs to the histone H2B family. In terms of assembly, the nucleosome is a histone octamer containing two molecules each of H2A, H2B, H3 and H4 assembled in one H3-H4 heterotetramer and two H2A-H2B heterodimers. The octamer wraps approximately 147 bp of DNA. Monoubiquitination at the C-terminal Lys gives a specific tag for epigenetic transcriptional activation and is also prerequisite for histone H3 'Lys-4' and 'Lys-79' methylation. In terms of processing, phosphorylated during apoptosis; which facilitates apoptotic chromatin condensation.

The protein localises to the nucleus. Its subcellular location is the chromosome. Core component of nucleosome. Nucleosomes wrap and compact DNA into chromatin, limiting DNA accessibility to the cellular machineries which require DNA as a template. Histones thereby play a central role in transcription regulation, DNA repair, DNA replication and chromosomal stability. DNA accessibility is regulated via a complex set of post-translational modifications of histones, also called histone code, and nucleosome remodeling. Functionally, has broad-spectrum antimicrobial and antibacterial activity. It is important in the antimicrobial defenses of fish skin and possesses strong activity against saprolegnia, the most common fungal infection in fish. It is also inhibitory to fish bacterial pathogens, such as aeromonas hydrophila, vibrio alginolyticus and E.coli D31. The protein is Histone H2B 1 of Ictalurus punctatus (Channel catfish).